The sequence spans 125 residues: Large ribosomal subunit protein eL31 (125 aa).

The protein belongs to the eukaryotic ribosomal protein eL31 family. Component of the large ribosomal subunit.

Its subcellular location is the cytoplasm. In terms of biological role, component of the large ribosomal subunit. The ribosome is a large ribonucleoprotein complex responsible for the synthesis of proteins in the cell. The protein is Large ribosomal subunit protein eL31 (rpl31) of Xenopus laevis (African clawed frog).